A 245-amino-acid polypeptide reads, in one-letter code: Protein mlo1 (245 aa).

Positions 4 to 38 constitute an SAP domain; that stretch reads YKSLKVAELREKLAEKGLSTAGNKAELVSRLTAAT. A disordered region spans residues 32–245; sequence SRLTAATESN…AERFGVAAKN (214 aa). The segment covering 37–52 has biased composition (low complexity); sequence ATESNDENTSNNNATD. Over residues 58-70 the composition is skewed to acidic residues; it reads PPEDDIDWGDMEN. A compositionally biased stretch (polar residues) spans 109-118; that stretch reads TSQAPETSTG. The span at 119–130 shows a compositional bias: basic and acidic residues; it reads AEEHQETTEESK. Residue Ser139 is modified to Phosphoserine. The span at 182–196 shows a compositional bias: low complexity; sequence SSNNKNHNQSKNPQN.

This sequence belongs to the SAP domain-containing ribonucleoprotein family.

The polypeptide is Protein mlo1 (mlo1) (Schizosaccharomyces pombe (strain 972 / ATCC 24843) (Fission yeast)).